The primary structure comprises 244 residues: Ribonuclease 3 (244 aa).

The region spanning 17-146 (FEKKMQELNL…FVGALYLDQG (130 aa)) is the RNase III domain. Glu59 lines the Mg(2+) pocket. Residue Asp63 is part of the active site. Mg(2+) contacts are provided by Asp132 and Glu135. Residue Glu135 is part of the active site. In terms of domain architecture, DRBM spans 172–241 (DFKTQFQEYV…AERAYKILKN (70 aa)).

The protein belongs to the ribonuclease III family. Homodimer. It depends on Mg(2+) as a cofactor.

It localises to the cytoplasm. The catalysed reaction is Endonucleolytic cleavage to 5'-phosphomonoester.. Its function is as follows. Digests double-stranded RNA. Involved in the processing of primary rRNA transcript to yield the immediate precursors to the large and small rRNAs (23S and 16S). Processes some mRNAs, and tRNAs when they are encoded in the rRNA operon. Processes pre-crRNA and tracrRNA of type II CRISPR loci if present in the organism. This Staphylococcus saprophyticus subsp. saprophyticus (strain ATCC 15305 / DSM 20229 / NCIMB 8711 / NCTC 7292 / S-41) protein is Ribonuclease 3.